A 242-amino-acid chain; its full sequence is RxLR effector protein PexRD15 (242 aa).

The N-terminal stretch at 1–24 is a signal peptide; sequence MMKSLYAVNLVLLLLLAFFAPAPA. The RxLR-dEER signature appears at 48 to 66; that stretch reads RLLRAHSSDKEEQKEEEER.

The protein belongs to the RxLR effector family.

It localises to the secreted. The protein resides in the host cell membrane. In terms of biological role, effector that enhances P.infestans colonization of Nicotiana benthamiana leaves. The polypeptide is RxLR effector protein PexRD15 (Phytophthora infestans (strain T30-4) (Potato late blight agent)).